Here is a 27-residue protein sequence, read N- to C-terminus: MDLIFPLVGSLLLVICVMVGVAFLTLL.

The chain crosses the membrane as a helical span at residues 3–23 (LIFPLVGSLLLVICVMVGVAF).

Belongs to the complex I subunit 1 family.

It is found in the mitochondrion inner membrane. It catalyses the reaction a ubiquinone + NADH + 5 H(+)(in) = a ubiquinol + NAD(+) + 4 H(+)(out). Functionally, core subunit of the mitochondrial membrane respiratory chain NADH dehydrogenase (Complex I) that is believed to belong to the minimal assembly required for catalysis. Complex I functions in the transfer of electrons from NADH to the respiratory chain. The immediate electron acceptor for the enzyme is believed to be ubiquinone. The sequence is that of NADH-ubiquinone oxidoreductase chain 1 (ND1) from Simulium vittatum (Striped black fly).